Reading from the N-terminus, the 402-residue chain is S-adenosylmethionine synthase (402 aa).

137–142 (GQGSAD) provides a ligand contact to ATP.

Belongs to the AdoMet synthase 2 family. Requires Mg(2+) as cofactor.

The catalysed reaction is L-methionine + ATP + H2O = S-adenosyl-L-methionine + phosphate + diphosphate. Its pathway is amino-acid biosynthesis; S-adenosyl-L-methionine biosynthesis; S-adenosyl-L-methionine from L-methionine: step 1/1. Its function is as follows. Catalyzes the formation of S-adenosylmethionine from methionine and ATP. This Pyrobaculum islandicum (strain DSM 4184 / JCM 9189 / GEO3) protein is S-adenosylmethionine synthase.